The following is a 421-amino-acid chain: Vinorine synthase (421 aa).

Active-site proton acceptor residues include histidine 160 and aspartate 362.

Belongs to the plant acyltransferase family. In terms of assembly, monomer. In terms of tissue distribution, mainly expressed in roots and, to a lower level, in leaves.

The enzyme catalyses 16-epivellosimine + acetyl-CoA = vinorine + CoA. Its pathway is alkaloid biosynthesis; ajmaline biosynthesis. Its activity is regulated as follows. Complete inhibition by 4-(2-aminoethyl)-benzenesulfonyl fluoride (AEBSF), N-tosyl-L-phenylalanine chloromethylketone (TPCK), Hg(2+) and diethyl-pyrocarbonate (DEPC). 50% inhibition by N-(N-(L-3-trans-carboxirane-2-carbonyl)-L-leucyl)-agmanitine (E-64), N-alpha-p-tosyl-L-lysine chloromethylketone (TLCK) and phenylmethylsulfonyl fluoride (PMSF). Its function is as follows. Acetyltransferase involved in the biosynthesis of ajmaline-type monoterpenoid indole alkaloids (MIAs) natural products, important plant-derived pharmaceuticals used in the therapy of heart disorders. Catalyzes the conversion of 16-epivellosimine to vinorine, precursor of vomilenine, an intermediate chemical in the biosynthesis of ajmaline. Acts on gardneral, but not on polyneuridine aldehyde or N-methylgardneral. The polypeptide is Vinorine synthase (Rauvolfia serpentina (Serpentine wood)).